Here is a 295-residue protein sequence, read N- to C-terminus: Biliverdin reductase A (295 aa).

The propeptide occupies 1–2 (MS). Residues 18-19 (RA), 76-79 (SSSH), and tyrosine 97 each bind NAD(+). Position 154 is a phosphoserine (serine 154). Residue serine 167 coordinates NAD(+). At threonine 173 the chain carries Phosphothreonine. A phosphoserine mark is found at serine 177 and serine 229. N6-acetyllysine is present on residues lysine 247 and lysine 252. Residues histidine 279, cysteine 280, cysteine 291, and histidine 292 each contribute to the Zn(2+) site.

It belongs to the Gfo/Idh/MocA family. Biliverdin reductase subfamily. Monomer. The cofactor is Zn(2+).

It is found in the cytoplasm. It localises to the cytosol. The enzyme catalyses (4Z,15Z)-bilirubin IXalpha + NAD(+) = biliverdin IXalpha + NADH + H(+). It carries out the reaction (4Z,15Z)-bilirubin IXalpha + NADP(+) = biliverdin IXalpha + NADPH + H(+). It participates in porphyrin-containing compound metabolism; protoheme degradation. In terms of biological role, reduces the gamma-methene bridge of the open tetrapyrrole, biliverdin IXalpha, to bilirubin with the concomitant oxidation of a NADH or NADPH cofactor. Does not reduce bilirubin IXbeta. Uses the reactants NADH or NADPH depending on the pH; NADH is used at the acidic pH range (6-6.9) and NADPH at the alkaline range (8.5-8.7). NADPH, however, is the probable reactant in biological systems. The polypeptide is Biliverdin reductase A (Mus musculus (Mouse)).